A 335-amino-acid polypeptide reads, in one-letter code: Lipoyl synthase (335 aa).

The [4Fe-4S] cluster site is built by C55, C60, C66, C81, C85, C88, and S292. Positions 67–281 (WEDREATFLI…SQRAEEIGFQ (215 aa)) constitute a Radical SAM core domain.

It belongs to the radical SAM superfamily. Lipoyl synthase family. It depends on [4Fe-4S] cluster as a cofactor.

The protein resides in the cytoplasm. The enzyme catalyses [[Fe-S] cluster scaffold protein carrying a second [4Fe-4S](2+) cluster] + N(6)-octanoyl-L-lysyl-[protein] + 2 oxidized [2Fe-2S]-[ferredoxin] + 2 S-adenosyl-L-methionine + 4 H(+) = [[Fe-S] cluster scaffold protein] + N(6)-[(R)-dihydrolipoyl]-L-lysyl-[protein] + 4 Fe(3+) + 2 hydrogen sulfide + 2 5'-deoxyadenosine + 2 L-methionine + 2 reduced [2Fe-2S]-[ferredoxin]. It functions in the pathway protein modification; protein lipoylation via endogenous pathway; protein N(6)-(lipoyl)lysine from octanoyl-[acyl-carrier-protein]: step 2/2. In terms of biological role, catalyzes the radical-mediated insertion of two sulfur atoms into the C-6 and C-8 positions of the octanoyl moiety bound to the lipoyl domains of lipoate-dependent enzymes, thereby converting the octanoylated domains into lipoylated derivatives. The protein is Lipoyl synthase of Micrococcus luteus (strain ATCC 4698 / DSM 20030 / JCM 1464 / CCM 169 / CCUG 5858 / IAM 1056 / NBRC 3333 / NCIMB 9278 / NCTC 2665 / VKM Ac-2230) (Micrococcus lysodeikticus).